The chain runs to 340 residues: Tryptophan--tRNA ligase (340 aa).

ATP-binding positions include 11-13 (RPT) and 19-20 (GH). The short motif at 12–20 (PTGKLHLGH) is the 'HIGH' region element. D140 is an L-tryptophan binding site. ATP contacts are provided by residues 152 to 154 (GND), L194, and 202 to 206 (KMSKS). A 'KMSKS' region motif is present at residues 202–206 (KMSKS).

It belongs to the class-I aminoacyl-tRNA synthetase family. Homodimer.

Its subcellular location is the cytoplasm. It catalyses the reaction tRNA(Trp) + L-tryptophan + ATP = L-tryptophyl-tRNA(Trp) + AMP + diphosphate + H(+). Functionally, catalyzes the attachment of tryptophan to tRNA(Trp). In Streptococcus pyogenes serotype M3 (strain ATCC BAA-595 / MGAS315), this protein is Tryptophan--tRNA ligase.